The primary structure comprises 315 residues: Ribosomal RNA small subunit methyltransferase H (315 aa).

S-adenosyl-L-methionine is bound by residues 37-39, Asp57, Phe83, Asp105, and Gln112; that span reads GGH.

Belongs to the methyltransferase superfamily. RsmH family.

It is found in the cytoplasm. The catalysed reaction is cytidine(1402) in 16S rRNA + S-adenosyl-L-methionine = N(4)-methylcytidine(1402) in 16S rRNA + S-adenosyl-L-homocysteine + H(+). In terms of biological role, specifically methylates the N4 position of cytidine in position 1402 (C1402) of 16S rRNA. This Pseudomonas fluorescens (strain SBW25) protein is Ribosomal RNA small subunit methyltransferase H.